A 539-amino-acid chain; its full sequence is Cell division control protein 6 homolog (539 aa).

The disordered stretch occupies residues 1–40; it reads MPAIAGPSSSPQKHVVGSRSESIGGVRSAEVNTSRKRKLI. Positions 35-38 match the Nuclear localization signal motif; sequence RKRK.

This sequence belongs to the CDC6/cdc18 family. In terms of tissue distribution, highly expressed in roots, flower buds and etiolated seedlings. Expressed in leaves and stems. Highly expressed in proliferating cells such as root meristems, leaf primordia and young growing leaves, as well as cells undergoing endoreduplication cycles.

It is found in the nucleus. May be involved in the initiation of DNA replication. May play a role in endoreduplication. Could act as one of the factors that contributes to maintain endoreduplication competence. The chain is Cell division control protein 6 homolog from Arabidopsis thaliana (Mouse-ear cress).